We begin with the raw amino-acid sequence, 429 residues long: L-dopachrome tautomerase yellow-f (429 aa).

The first 23 residues, 1-23, serve as a signal peptide directing secretion; sequence MLSLDVLLLCAISGFQLLISADG. Asn133 and Asn372 each carry an N-linked (GlcNAc...) asparagine glycan.

It belongs to the major royal jelly protein family.

It is found in the secreted. The catalysed reaction is L-dopachrome = 5,6-dihydroxyindole-2-carboxylate. It participates in pigment biosynthesis; melanin biosynthesis. Functionally, tautomerization of L-dopachrome with decarboxylation to give 5,6-dihydroxyindole (DHI). Also catalyzes the tautomerization of the methyl ester of L-dopachrome and dopamine chrome. May play a role in melanization reactions during late pupal and adult stages. May play a role in melanization reactions during larval and early pupal stages. The chain is L-dopachrome tautomerase yellow-f from Drosophila melanogaster (Fruit fly).